We begin with the raw amino-acid sequence, 340 residues long: MDENVAEFLRRIILKIPLCEMKTILEAWDFLSEDQLQSINLKQRKEFLAQEVILLCEDKCASLDDMALLDLMYTQFHRHQKLWNVFQMSKEPGGNDVDLFDMEQFQSSFKRILQRALKNVTVSFRVYEKNSVWIRVAWGTQYSQPNQYKPTFVVYYPQTPYVFISSCYLKSTVPLLHQALKVASKHHQMAQLDLRSRHLDSLTAIVFNEYDQTFENYNSTASWREGSLGLKTDLDSKIIHENTEEKVRIHRATQEAFGAYPQPQLEFAQYKLETKFKSDVGGGILADRKEPLRCLVKFSSPHLLEALKSLAPAGIADTPLSPLLTCIPSKKMNYFKIRDK.

A phosphoserine mark is found at serine 227 and serine 236.

It belongs to the CENP-N/CHL4 family. In terms of assembly, component of the CENPA-NAC complex, at least composed of CENPA, CENPC, CENPH, CENPM, CENPN, CENPT and CENPU. The CENPA-NAC complex interacts with the CENPA-CAD complex, composed of CENPI, CENPK, CENPL, CENPO, CENPP, CENPQ, CENPR and CENPS. Interacts directly with CENPA. Identified in a centromere complex containing histones H2A, H2B and H4, and at least CENPA, CENPB, CENPC, CENPT, CENPN, HJURP, SUPT16H, SSRP1 and RSF1.

It is found in the nucleus. It localises to the chromosome. Its subcellular location is the centromere. The protein localises to the kinetochore. Functionally, component of the CENPA-NAC (nucleosome-associated) complex, a complex that plays a central role in assembly of kinetochore proteins, mitotic progression and chromosome segregation. The CENPA-NAC complex recruits the CENPA-CAD (nucleosome distal) complex and may be involved in incorporation of newly synthesized CENPA into centromeres. CENPN is the first protein to bind specifically to CENPA nucleosomes and the direct binding of CENPA nucleosomes by CENPN is required for centromere assembly. Required for chromosome congression and efficiently align the chromosomes on a metaphase plate. In Rattus norvegicus (Rat), this protein is Centromere protein N (Cenpn).